We begin with the raw amino-acid sequence, 447 residues long: Argininosuccinate synthase (447 aa).

ATP contacts are provided by residues 17–25 (AFSGGLDTS) and Ala-43. Position 99 (Tyr-99) interacts with L-citrulline. Positions 129 and 131 each coordinate ATP. The L-aspartate site is built by Thr-131, Asn-135, and Asp-136. Position 135 (Asn-135) interacts with L-citrulline. Residue Asp-136 coordinates ATP. L-citrulline contacts are provided by Arg-139 and Ser-192. Asp-194 contributes to the ATP binding site. Positions 201, 203, and 280 each coordinate L-citrulline.

The protein belongs to the argininosuccinate synthase family. Type 2 subfamily. In terms of assembly, homotetramer.

The protein resides in the cytoplasm. The enzyme catalyses L-citrulline + L-aspartate + ATP = 2-(N(omega)-L-arginino)succinate + AMP + diphosphate + H(+). Its pathway is amino-acid biosynthesis; L-arginine biosynthesis; L-arginine from L-ornithine and carbamoyl phosphate: step 2/3. The chain is Argininosuccinate synthase from Salmonella newport (strain SL254).